The sequence spans 123 residues: Small ribosomal subunit protein uS12 (123 aa).

D89 carries the 3-methylthioaspartic acid modification.

It belongs to the universal ribosomal protein uS12 family. In terms of assembly, part of the 30S ribosomal subunit. Contacts proteins S8 and S17. May interact with IF1 in the 30S initiation complex.

Functionally, with S4 and S5 plays an important role in translational accuracy. Its function is as follows. Interacts with and stabilizes bases of the 16S rRNA that are involved in tRNA selection in the A site and with the mRNA backbone. Located at the interface of the 30S and 50S subunits, it traverses the body of the 30S subunit contacting proteins on the other side and probably holding the rRNA structure together. The combined cluster of proteins S8, S12 and S17 appears to hold together the shoulder and platform of the 30S subunit. The polypeptide is Small ribosomal subunit protein uS12 (Methylobacterium sp. (strain 4-46)).